A 239-amino-acid polypeptide reads, in one-letter code: Sugar fermentation stimulation protein homolog (239 aa).

Belongs to the SfsA family.

This is Sugar fermentation stimulation protein homolog from Cyanothece sp. (strain PCC 7425 / ATCC 29141).